The following is a 551-amino-acid chain: Putative BTB/POZ domain-containing protein L76 (551 aa).

Residues 19–90 (TDIILEIEDD…FYGQENDVID (72 aa)) form the BTB domain.

This sequence belongs to the mimivirus BTB/WD family.

The sequence is that of Putative BTB/POZ domain-containing protein L76 from Acanthamoeba polyphaga (Amoeba).